Consider the following 523-residue polypeptide: Leucine-rich repeat transmembrane neuronal protein 1 (523 aa).

A signal peptide spans Met-1 to Ala-34. Residues Ala-35–Asn-63 form the LRRNT domain. Topologically, residues Ala-35 to Lys-428 are extracellular. Residues Asn-56 and Asn-63 are each glycosylated (N-linked (GlcNAc...) asparagine). 10 LRR repeats span residues Leu-64–Gly-87, Met-89–Lys-111, Leu-112–Pro-135, Met-136–Gly-159, Arg-161–Asp-183, Cys-184–Gly-207, Phe-209–Arg-231, Ile-233–Val-255, Trp-256–Thr-278, and Pro-280–Ser-302. An N-linked (GlcNAc...) asparagine glycan is attached at Asn-130. The 52-residue stretch at Asn-314 to Asp-365 folds into the LRRCT domain. N-linked (GlcNAc...) asparagine glycosylation is present at Asn-381. Residues Val-429–Val-449 traverse the membrane as a helical segment. Over Ser-450 to Val-523 the chain is Cytoplasmic. The short motif at Glu-520 to Val-523 is the May be involved in DLG4-binding element.

Belongs to the LRRTM family. In terms of assembly, interacts with DLG4.

The protein resides in the cell membrane. Its subcellular location is the postsynaptic cell membrane. Functionally, exhibits strong synaptogenic activity, restricted to excitatory presynaptic differentiation, acting at both pre- and postsynaptic level. This chain is Leucine-rich repeat transmembrane neuronal protein 1 (Lrrtm1), found in Rattus norvegicus (Rat).